Consider the following 489-residue polypeptide: Betaine aldehyde dehydrogenase (489 aa).

K(+) contacts are provided by Thr26 and Asp93. 150–152 (GAW) lines the NAD(+) pocket. Lys162 serves as the catalytic Charge relay system. 176–179 (KPSE) contributes to the NAD(+) binding site. K(+) is bound at residue Val180. Residue 229–232 (GVET) participates in NAD(+) binding. Residue Leu245 participates in K(+) binding. Catalysis depends on Glu251, which acts as the Proton acceptor. Residues Gly253, Cys285, and Glu386 each coordinate NAD(+). The active-site Nucleophile is the Cys285. Residue Cys285 is modified to Cysteine sulfenic acid (-SOH). K(+) contacts are provided by Lys456 and Gly459. Glu463 functions as the Charge relay system in the catalytic mechanism.

This sequence belongs to the aldehyde dehydrogenase family. In terms of assembly, dimer of dimers. The cofactor is K(+).

The enzyme catalyses betaine aldehyde + NAD(+) + H2O = glycine betaine + NADH + 2 H(+). Its pathway is amine and polyamine biosynthesis; betaine biosynthesis via choline pathway; betaine from betaine aldehyde: step 1/1. In terms of biological role, involved in the biosynthesis of the osmoprotectant glycine betaine. Catalyzes the irreversible oxidation of betaine aldehyde to the corresponding acid. This is Betaine aldehyde dehydrogenase from Burkholderia ambifaria (strain ATCC BAA-244 / DSM 16087 / CCUG 44356 / LMG 19182 / AMMD) (Burkholderia cepacia (strain AMMD)).